We begin with the raw amino-acid sequence, 734 residues long: Paralemmin-3 (734 aa).

A coiled-coil region spans residues 19 to 64 (SALYRQRLEVIAEKRRLQEEIGAARRELEEEKLRVERLKRKSLRER). Disordered regions lie at residues 62 to 100 (RERWLMDGAAEGPERPEEPASKDPQSPEGQAQARIRNLE) and 114 to 217 (QSAS…LGVS). The segment covering 73–82 (GPERPEEPAS) has biased composition (basic and acidic residues). Residues 90–116 (GQAQARIRNLEDSLFSLQSQLQLLQSA) adopt a coiled-coil conformation. A phosphoserine mark is found at Ser-139, Ser-158, Ser-167, Ser-170, and Ser-172. The segment covering 186–198 (RPSTEAIGTSSEA) has biased composition (polar residues). Position 270 is a phosphoserine (Ser-270). Basic and acidic residues predominate over residues 297–308 (DVTGESGRDAEA). Disordered regions lie at residues 297–347 (DVTG…PGVE), 374–400 (PQGAGSAGEPEALIGAQPRGGEASWEV), and 413–709 (EKGR…YAPA). At Thr-311 the chain carries Phosphothreonine. Basic and acidic residues predominate over residues 315-336 (RLQEQFEAETCRKEEGASRDSL). Phosphoserine occurs at positions 332 and 335. Composition is skewed to basic and acidic residues over residues 413-427 (EKGRAEKLGAEREDG), 435-452 (TQGREENEAEKVERKDSE), 462-484 (DEEKWEVKTTEGEESLEVEKGGE), 494-531 (LVTEKKPEGSLETERKGSEMPLDQEKDGEGSLDRESKT), 540-561 (IGDKSSLDETKGSKKLLDEKTG), 571-582 (EGSKKLLDREAD), 589-607 (EVDKTSGAKDDVSPEEQGK), and 630-647 (DEPRSEEQGQQEPEKQEG). The residue at position 451 (Ser-451) is a Phosphoserine. A Phosphoserine modification is found at Ser-601. Residue Ser-721 is modified to Phosphoserine. 2 S-palmitoyl cysteine lipidation sites follow: Cys-728 and Cys-730. Cys-731 carries the cysteine methyl ester modification. Cys-731 carries the S-farnesyl cysteine lipid modification. Positions 732–734 (VVM) are cleaved as a propeptide — removed in mature form.

It belongs to the paralemmin family. Interacts with SIGIRR. In terms of processing, palmitoylated on Cys-728 and Cys-730 and prenylated on Cys-731; which is required for membrane association.

Its subcellular location is the cytoplasm. It is found in the cell membrane. Its function is as follows. ATP-binding protein, which may act as a adapter in the Toll-like receptor (TLR) signaling. This Mus musculus (Mouse) protein is Paralemmin-3 (Palm3).